A 154-amino-acid chain; its full sequence is Fluoride-specific ion channel FluC 1 (154 aa).

A run of 4 helical transmembrane segments spans residues 28 to 48 (VVAV…AASL), 59 to 79 (WTTF…MVVI), 91 to 111 (PFFG…AVDS), and 124 to 144 (LAYL…AAWA). Na(+) is bound by residues Gly-99 and Thr-102.

This sequence belongs to the fluoride channel Fluc/FEX (TC 1.A.43) family.

It is found in the cell membrane. The enzyme catalyses fluoride(in) = fluoride(out). With respect to regulation, na(+) is not transported, but it plays an essential structural role and its presence is essential for fluoride channel function. In terms of biological role, fluoride-specific ion channel. Important for reducing fluoride concentration in the cell, thus reducing its toxicity. In Streptomyces coelicolor (strain ATCC BAA-471 / A3(2) / M145), this protein is Fluoride-specific ion channel FluC 1.